A 260-amino-acid polypeptide reads, in one-letter code: Apolipoprotein A-I (260 aa).

A signal peptide spans 1-18 (MKFAALALALLLAVGSHA). The tract at residues 32–63 (ARAVLDVYLTQVKDMSLRAVNQLDDPQYAEFK) is 3 X approximate tandem repeats. 2 tandem repeats follow at residues 64–85 (TNLA…GSVS) and 87–107 (MTDS…ESLN). The 10 X approximate tandem repeats stretch occupies residues 64-260 (TNLAQRIEEM…EIIAASVTKS (197 aa)). Residues 108-118 (VDLEALKSSLA) form a 3; half-length repeat. 5 tandem repeats follow at residues 119–140 (PQNE…TLLT), 141–162 (PIYN…TRLE), 163–184 (PVME…AVLM), 185–206 (PMVE…EVVQ), and 207–225 (PYVQ…QAQT). One copy of the 9; half-length repeat lies at 226 to 236 (VDTDALRTKIT). Repeat 10 spans residues 237 to 260 (PLVEEIKVKMNAIFEIIAASVTKS).

This sequence belongs to the apolipoprotein A1/A4/E family. As to expression, strong expression in liver with lower expression in intestine.

The protein localises to the secreted. Participates in the reverse transport of cholesterol from tissues to the liver for excretion by promoting cholesterol efflux from tissues and by acting as a cofactor for the lecithin cholesterol acyltransferase (LCAT). This Sparus aurata (Gilthead sea bream) protein is Apolipoprotein A-I (apoa1).